A 190-amino-acid polypeptide reads, in one-letter code: dCTP deaminase (190 aa).

113–118 (KSTYAR) is a dCTP binding site. Glu139 acts as the Proton donor/acceptor in catalysis. DCTP is bound by residues Gln158, Tyr172, Lys181, and Gln182.

Belongs to the dCTP deaminase family. Homotrimer.

It carries out the reaction dCTP + H2O + H(+) = dUTP + NH4(+). It participates in pyrimidine metabolism; dUMP biosynthesis; dUMP from dCTP (dUTP route): step 1/2. In terms of biological role, catalyzes the deamination of dCTP to dUTP. This is dCTP deaminase from Chlamydia felis (strain Fe/C-56) (Chlamydophila felis).